Here is a 290-residue protein sequence, read N- to C-terminus: Cell division protein ZipA (290 aa).

Position 1 (M1) is a topological domain, periplasmic. Residues 2 to 22 (DIGLREWLIVIGLIVIAGILF) form a helical membrane-spanning segment. Residues 23–290 (DGWRRMRGGK…HERRSLMQKR (268 aa)) lie on the Cytoplasmic side of the membrane. The disordered stretch occupies residues 66 to 143 (REPSFDEQDL…REKAPSVAAA (78 aa)). Positions 81–99 (REGKERKGGKRQDEPRQGD) are enriched in basic and acidic residues. The span at 100–114 (LDLDEGMALEADPSD) shows a compositional bias: acidic residues.

Belongs to the ZipA family. In terms of assembly, interacts with FtsZ via their C-terminal domains.

It is found in the cell inner membrane. In terms of biological role, essential cell division protein that stabilizes the FtsZ protofilaments by cross-linking them and that serves as a cytoplasmic membrane anchor for the Z ring. Also required for the recruitment to the septal ring of downstream cell division proteins. The polypeptide is Cell division protein ZipA (Pseudomonas paraeruginosa (strain DSM 24068 / PA7) (Pseudomonas aeruginosa (strain PA7))).